The primary structure comprises 324 residues: MKRHLLSAGDLSRDDAELVLRTAAELRELADRPIKKLPALRGRTVVNLFFEDSTRTRISFEAAAKRLSADVINFAAKGSSLSKGESLKDTALTLEAMGADAVVVRHGASGAPHRLAHSGWVRSSVVNAGDGTHEHPTQALLDAFTMWRHLGQGKEQSLDGRRIAIVGDVLHSRVARSNALLLKTLGAEVTLVAPPTLLPVGIDTWPVETSYDLDAVLPKADAVMMLRVQRERMSGGFFPTAREYSRRYGLDGRRMATLQDHTIVMHPGPMVRGMEITADVADSDRSVIVEQVTNGVAVRMAVLYLLLGGSEPAVSTSSTNEAEE.

2 residues coordinate carbamoyl phosphate: Arg55 and Thr56. Lys83 lines the L-aspartate pocket. Arg105, His135, and Gln138 together coordinate carbamoyl phosphate. Residues Arg173 and Arg227 each contribute to the L-aspartate site. The carbamoyl phosphate site is built by Gly268 and Pro269.

It belongs to the aspartate/ornithine carbamoyltransferase superfamily. ATCase family. In terms of assembly, heterododecamer (2C3:3R2) of six catalytic PyrB chains organized as two trimers (C3), and six regulatory PyrI chains organized as three dimers (R2).

The catalysed reaction is carbamoyl phosphate + L-aspartate = N-carbamoyl-L-aspartate + phosphate + H(+). The protein operates within pyrimidine metabolism; UMP biosynthesis via de novo pathway; (S)-dihydroorotate from bicarbonate: step 2/3. In terms of biological role, catalyzes the condensation of carbamoyl phosphate and aspartate to form carbamoyl aspartate and inorganic phosphate, the committed step in the de novo pyrimidine nucleotide biosynthesis pathway. The protein is Aspartate carbamoyltransferase catalytic subunit of Nocardioides sp. (strain ATCC BAA-499 / JS614).